The chain runs to 1010 residues: Phosphatidylserine decarboxylase proenzyme 2 (1010 aa).

C2 domains are found at residues 1–114 (MSQA…SSWE) and 247–370 (DFES…DKPC). Positions 342, 345, and 348 each coordinate Ca(2+). The 36-residue stretch at 458–493 (LRRQLWMHLLQGNDTQMKGTLDLIELNYFVDCLGSN) folds into the EF-hand domain. Active-site charge relay system; for autoendoproteolytic cleavage activity residues include Asp-734, His-793, and Ser-880. Ser-880 acts as the Schiff-base intermediate with substrate; via pyruvic acid; for decarboxylase activity in catalysis. Ser-880 carries the post-translational modification Pyruvic acid (Ser); by autocatalysis.

It belongs to the phosphatidylserine decarboxylase family. PSD-B subfamily. Eukaryotic type II sub-subfamily. In terms of assembly, heterodimer of a large membrane-associated beta subunit and a small pyruvoyl-containing alpha subunit. Interacts with pstB2. This interaction may be a means to structurally tether the donor membrane (ER) harboring PstB2 to acceptor membranes (Golgi/endosomes) harboring PSD2 during PtdSer transport to the site of PtdEtn synthesis. Pyruvate serves as cofactor. The cofactor is Ca(2+). Post-translationally, is synthesized initially as an inactive proenzyme. Formation of the active enzyme involves a self-maturation process in which the active site pyruvoyl group is generated from an internal serine residue via an autocatalytic post-translational modification. Two non-identical subunits are generated from the proenzyme in this reaction, and the pyruvate is formed at the N-terminus of the alpha chain, which is derived from the carboxyl end of the proenzyme. The autoendoproteolytic cleavage occurs by a canonical serine protease mechanism, in which the side chain hydroxyl group of the serine supplies its oxygen atom to form the C-terminus of the beta chain, while the remainder of the serine residue undergoes an oxidative deamination to produce ammonia and the pyruvoyl prosthetic group on the alpha chain. During this reaction, the Ser that is part of the protease active site of the proenzyme becomes the pyruvoyl prosthetic group, which constitutes an essential element of the active site of the mature decarboxylase.

The protein resides in the golgi apparatus membrane. It localises to the endosome membrane. The catalysed reaction is a 1,2-diacyl-sn-glycero-3-phospho-L-serine + H(+) = a 1,2-diacyl-sn-glycero-3-phosphoethanolamine + CO2. It functions in the pathway phospholipid metabolism; phosphatidylethanolamine biosynthesis; phosphatidylethanolamine from CDP-diacylglycerol: step 2/2. Functionally, catalyzes the formation of phosphatidylethanolamine (PtdEtn) from phosphatidylserine (PtdSer). Plays a central role in phospholipid metabolism and in the interorganelle trafficking of phosphatidylserine. In Komagataella phaffii (strain GS115 / ATCC 20864) (Yeast), this protein is Phosphatidylserine decarboxylase proenzyme 2.